The chain runs to 82 residues: uncharacterized protein (82 aa).

This is an uncharacterized protein from Anabaena cylindrica.